Reading from the N-terminus, the 96-residue chain is ATP-dependent Clp protease adapter protein ClpS (96 aa).

It belongs to the ClpS family. In terms of assembly, binds to the N-terminal domain of the chaperone ClpA.

Involved in the modulation of the specificity of the ClpAP-mediated ATP-dependent protein degradation. The chain is ATP-dependent Clp protease adapter protein ClpS from Campylobacter jejuni subsp. jejuni serotype O:2 (strain ATCC 700819 / NCTC 11168).